We begin with the raw amino-acid sequence, 738 residues long: Putative cyclic nucleotide-gated ion channel 7 (738 aa).

The Cytoplasmic portion of the chain corresponds to 1 to 104; the sequence is MYKSQYISGQ…DKTLLVWNRL (104 aa). The helical transmembrane segment at 105–125 threads the bilayer; sequence FVISCILAVSVDPLFFYLPIV. Topologically, residues 126–139 are extracellular; the sequence is DNSGSSCIGIDTKL. The chain crosses the membrane as a helical span at residues 140–160; it reads AVTTTTLRTIVDVFYLTRMAL. At 161-193 the chain is on the cytoplasmic side; it reads QFRTAYIAPSSRVFGRGELVIDPAKIAERYLTR. The helical transmembrane segment at 194 to 214 threads the bilayer; the sequence is YFVVDFLAVLPLPQIAVWKFL. Residues 215 to 227 are Extracellular-facing; sequence HGSKGSDVLPTKT. The helical transmembrane segment at 228-248 threads the bilayer; that stretch reads ALLNIVIVQYIPRFVRFIPLT. At 249-268 the chain is on the cytoplasmic side; sequence SELKKTAGAFAEGAWAGAAY. A helical membrane pass occupies residues 269-289; that stretch reads YLLWYMLASHITGAFWYMLSV. Residues 290–395 lie on the Extracellular side of the membrane; it reads ERNDTCWRFA…GQGLQTSTFP (106 aa). The helical transmembrane segment at 396–416 threads the bilayer; sequence GEVLFSIAIAIAGLLLFALLI. Residues 417–738 are Cytoplasmic-facing; the sequence is GNMQTYLQSL…KPPEPDFDAE (322 aa). Residues 502–632 and Glu573 each bind a nucleoside 3',5'-cyclic phosphate; that span reads LFAN…TFRF. Residues 618 to 633 form a calmodulin-binding region; the sequence is FRRLHSRQVQQTFRFY. In terms of domain architecture, IQ spans 638–667; that stretch reads RTWASCFIQAAWRRYSRRKNAELRRIEEKE. Disordered stretches follow at residues 671–693 and 715–738; these read GYEDEYDDESDKRPMVITRSESS and LRSSESSKTLINLQKPPEPDFDAE.

Belongs to the cyclic nucleotide-gated cation channel (TC 1.A.1.5) family. In terms of assembly, homotetramer or heterotetramer.

The protein resides in the cell membrane. Its function is as follows. Putative cyclic nucleotide-gated ion channel. The chain is Putative cyclic nucleotide-gated ion channel 7 (CNGC7) from Arabidopsis thaliana (Mouse-ear cress).